The following is a 149-amino-acid chain: Large ribosomal subunit protein uL24 (149 aa).

The protein belongs to the universal ribosomal protein uL24 family. Part of the 50S ribosomal subunit.

One of two assembly initiator proteins, it binds directly to the 5'-end of the 23S rRNA, where it nucleates assembly of the 50S subunit. In terms of biological role, one of the proteins that surrounds the polypeptide exit tunnel on the outside of the subunit. The chain is Large ribosomal subunit protein uL24 from Nostoc sp. (strain PCC 7120 / SAG 25.82 / UTEX 2576).